Reading from the N-terminus, the 426-residue chain is Putative 3-oxoacyl-[acyl-carrier-protein] synthase, mitochondrial (426 aa).

The N-terminal 18 residues, 1-18 (MKRVVITGLGAVTPLGNG), are a transit peptide targeting the mitochondrion. A Ketosynthase family 3 (KS3) domain is found at 19–423 (VKTNWRNLIQ…GTNASLCFKK (405 aa)). Residues cysteine 170, histidine 311, and histidine 351 each act as for beta-ketoacyl synthase activity in the active site.

The protein belongs to the thiolase-like superfamily. Beta-ketoacyl-ACP synthases family.

It is found in the mitochondrion. It catalyses the reaction a fatty acyl-[ACP] + malonyl-[ACP] + H(+) = a 3-oxoacyl-[ACP] + holo-[ACP] + CO2. It carries out the reaction butanoyl-[ACP] + malonyl-[ACP] + H(+) = 3-oxohexanoyl-[ACP] + holo-[ACP] + CO2. The enzyme catalyses hexanoyl-[ACP] + malonyl-[ACP] + H(+) = 3-oxooctanoyl-[ACP] + holo-[ACP] + CO2. The catalysed reaction is octanoyl-[ACP] + malonyl-[ACP] + H(+) = 3-oxodecanoyl-[ACP] + holo-[ACP] + CO2. It catalyses the reaction decanoyl-[ACP] + malonyl-[ACP] + H(+) = 3-oxododecanoyl-[ACP] + holo-[ACP] + CO2. It carries out the reaction dodecanoyl-[ACP] + malonyl-[ACP] + H(+) = 3-oxotetradecanoyl-[ACP] + holo-[ACP] + CO2. The enzyme catalyses tetradecanoyl-[ACP] + malonyl-[ACP] + H(+) = 3-oxohexadecanoyl-[ACP] + holo-[ACP] + CO2. Its pathway is lipid metabolism; fatty acid biosynthesis. Functionally, may play a role in the biosynthesis of lipoic acid as well as longer chain fatty acids required for optimal mitochondrial function. The chain is Putative 3-oxoacyl-[acyl-carrier-protein] synthase, mitochondrial from Schizosaccharomyces pombe (strain 972 / ATCC 24843) (Fission yeast).